The sequence spans 238 residues: tRNA (guanine-N(7)-)-methyltransferase (238 aa).

S-adenosyl-L-methionine-binding residues include E68, E93, D120, and D143. D143 is an active-site residue. Residues K147, D179, and 216–219 (TKFE) each bind substrate.

It belongs to the class I-like SAM-binding methyltransferase superfamily. TrmB family.

It catalyses the reaction guanosine(46) in tRNA + S-adenosyl-L-methionine = N(7)-methylguanosine(46) in tRNA + S-adenosyl-L-homocysteine. The protein operates within tRNA modification; N(7)-methylguanine-tRNA biosynthesis. Its function is as follows. Catalyzes the formation of N(7)-methylguanine at position 46 (m7G46) in tRNA. The chain is tRNA (guanine-N(7)-)-methyltransferase from Shewanella denitrificans (strain OS217 / ATCC BAA-1090 / DSM 15013).